The sequence spans 250 residues: Triosephosphate isomerase (250 aa).

Asparagine 9–lysine 11 is a substrate binding site. The active-site Electrophile is the histidine 95. Glutamate 167 (proton acceptor) is an active-site residue. Substrate-binding positions include glycine 173, serine 213, and glycine 234 to glycine 235.

The protein belongs to the triosephosphate isomerase family. Homodimer.

It localises to the cytoplasm. The enzyme catalyses D-glyceraldehyde 3-phosphate = dihydroxyacetone phosphate. Its pathway is carbohydrate biosynthesis; gluconeogenesis. The protein operates within carbohydrate degradation; glycolysis; D-glyceraldehyde 3-phosphate from glycerone phosphate: step 1/1. Its function is as follows. Involved in the gluconeogenesis. Catalyzes stereospecifically the conversion of dihydroxyacetone phosphate (DHAP) to D-glyceraldehyde-3-phosphate (G3P). The polypeptide is Triosephosphate isomerase (Chloroflexus aurantiacus (strain ATCC 29366 / DSM 635 / J-10-fl)).